A 302-amino-acid polypeptide reads, in one-letter code: Coenzyme PQQ synthesis protein B (302 aa).

Belongs to the PqqB family.

It functions in the pathway cofactor biosynthesis; pyrroloquinoline quinone biosynthesis. May be involved in the transport of PQQ or its precursor to the periplasm. This is Coenzyme PQQ synthesis protein B from Azotobacter vinelandii (strain DJ / ATCC BAA-1303).